The primary structure comprises 601 residues: Glutathione-regulated potassium-efflux system protein KefB (601 aa).

13 helical membrane passes run 4 to 24 (SDFL…VPLA), 29 to 49 (IGAV…GLGF), 55 to 75 (EILH…GLEL), 87 to 107 (IFGV…GLLM), 115 to 135 (AAVV…LQLM), 152 to 172 (VLLF…LLAG), 177 to 197 (HFDW…LIGG), 207 to 227 (FIAA…LVLG), 230 to 250 (LFMD…GVLL), 268 to 288 (GLLL…GVLY), 291 to 311 (LLWV…VLYL), 324 to 344 (MQFA…FSTA), and 356 to 376 (ALLL…MKLV). Residues 400–519 (KPQVIVVGFG…AGVTQFSRET (120 aa)) form the RCK N-terminal domain.

This sequence belongs to the monovalent cation:proton antiporter 2 (CPA2) transporter (TC 2.A.37) family. KefB subfamily. Interacts with the regulatory subunit KefG.

The protein localises to the cell inner membrane. In terms of biological role, pore-forming subunit of a potassium efflux system that confers protection against electrophiles. Catalyzes K(+)/H(+) antiport. In Escherichia coli O17:K52:H18 (strain UMN026 / ExPEC), this protein is Glutathione-regulated potassium-efflux system protein KefB.